The following is a 77-amino-acid chain: Dermatoxin-S1 (77 aa).

Residues 1 to 22 (MAFLKKSLFLILFLGLVPLSFC) form the signal peptide. Residues 23 to 44 (ENDKREGENEEEQDDDQSEEKR) constitute a propeptide that is removed on maturation. Gln76 carries the glutamine amide modification.

Expressed by the skin glands.

Its subcellular location is the secreted. It localises to the target cell membrane. Functionally, antimicrobial peptide with potent activity against Gram-positive bacteria B.megaterium, C.glutamicum and S.aureus and mollicutes A.laidlawii and S.melliferum. Less active against Gram-negative bacteria B.cepacia, P.aeruginosa, S.typhimurium and S.meliloti. Probably acts by disturbing membrane functions with its amphipathic structure. The chain is Dermatoxin-S1 from Phyllomedusa sauvagei (Sauvage's leaf frog).